A 200-amino-acid chain; its full sequence is Pyridoxal 5'-phosphate synthase subunit PdxT (200 aa).

46–48 (GES) is a binding site for L-glutamine. Cysteine 78 acts as the Nucleophile in catalysis. L-glutamine contacts are provided by residues arginine 107 and 138 to 139 (IR). Active-site charge relay system residues include histidine 175 and glutamate 177.

The protein belongs to the glutaminase PdxT/SNO family. As to quaternary structure, in the presence of PdxS, forms a dodecamer of heterodimers. Only shows activity in the heterodimer.

The enzyme catalyses aldehydo-D-ribose 5-phosphate + D-glyceraldehyde 3-phosphate + L-glutamine = pyridoxal 5'-phosphate + L-glutamate + phosphate + 3 H2O + H(+). The catalysed reaction is L-glutamine + H2O = L-glutamate + NH4(+). The protein operates within cofactor biosynthesis; pyridoxal 5'-phosphate biosynthesis. Catalyzes the hydrolysis of glutamine to glutamate and ammonia as part of the biosynthesis of pyridoxal 5'-phosphate. The resulting ammonia molecule is channeled to the active site of PdxS. In Corynebacterium glutamicum (strain ATCC 13032 / DSM 20300 / JCM 1318 / BCRC 11384 / CCUG 27702 / LMG 3730 / NBRC 12168 / NCIMB 10025 / NRRL B-2784 / 534), this protein is Pyridoxal 5'-phosphate synthase subunit PdxT.